The primary structure comprises 162 residues: Glycine cleavage system H protein, mitochondrial (162 aa).

The N-terminal 31 residues, 1 to 31 (MALRMWASSTANALRLSSATRPHFSPLSRCF), are a transit peptide targeting the mitochondrion. The Lipoyl-binding domain occupies 53–135 (VATIGITDHA…YEDGWMIKVK (83 aa)). Residue K94 is modified to N6-lipoyllysine.

Belongs to the GcvH family. The glycine cleavage system is composed of four proteins: P, T, L and H. It depends on (R)-lipoate as a cofactor.

It localises to the mitochondrion. Its function is as follows. The glycine cleavage system catalyzes the degradation of glycine. The H protein shuttles the methylamine group of glycine from the P protein to the T protein. The chain is Glycine cleavage system H protein, mitochondrial (GDCSH) from Flaveria anomala (Yellowtops).